A 449-amino-acid chain; its full sequence is UDP-N-acetylglucosamine 1-carboxyvinyltransferase (449 aa).

Residues 1-12 (MQVTVNEHDAVE) are compositionally biased toward basic and acidic residues. The tract at residues 1–30 (MQVTVNEHDAVERVATATPAGNREAHAHGT) is disordered. 51 to 52 (KN) lines the phosphoenolpyruvate pocket. Residue Arg-121 participates in UDP-N-acetyl-alpha-D-glucosamine binding. The active-site Proton donor is the Cys-145. Position 145 is a 2-(S-cysteinyl)pyruvic acid O-phosphothioketal (Cys-145). UDP-N-acetyl-alpha-D-glucosamine contacts are provided by residues 150–154 (RPVDQ), Asp-333, and Ile-355.

The protein belongs to the EPSP synthase family. MurA subfamily.

The protein resides in the cytoplasm. The catalysed reaction is phosphoenolpyruvate + UDP-N-acetyl-alpha-D-glucosamine = UDP-N-acetyl-3-O-(1-carboxyvinyl)-alpha-D-glucosamine + phosphate. It functions in the pathway cell wall biogenesis; peptidoglycan biosynthesis. Its function is as follows. Cell wall formation. Adds enolpyruvyl to UDP-N-acetylglucosamine. The chain is UDP-N-acetylglucosamine 1-carboxyvinyltransferase from Burkholderia pseudomallei (strain 1710b).